Reading from the N-terminus, the 852-residue chain is Taste receptor type 1 member 3 (852 aa).

Positions 1 to 20 (MLGPAVLGLSLWALLHPGTG) are cleaved as a signal peptide. Topologically, residues 21–570 (APLCLSQQLR…FLAWGEPAVL (550 aa)) are extracellular. N-linked (GlcNAc...) asparagine glycans are attached at residues Asn-85, Asn-130, Asn-264, Asn-285, Asn-380, Asn-411, Asn-432, and Asn-475. Residues 536 to 545 (IACTFCGQDE) are required for brazzein responsiveness. A helical transmembrane segment spans residues 571-591 (LLLLLLSLALGLVLAALGLFV). Residues 592 to 603 (HHRDSPLVQASG) lie on the Cytoplasmic side of the membrane. A helical transmembrane segment spans residues 604 to 624 (GPLACFGLVCLGLVCLSVLLF). Over 625–639 (PGQPSPARCLAQQPL) the chain is Extracellular. Residues 640-660 (SHLPLTGCLSTLFLQAAEIFV) traverse the membrane as a helical segment. Topologically, residues 661–682 (ESELPLSWADRLSGCLRGPWAW) are cytoplasmic. Residues 683–703 (LVVLLAMLVEVALCTWYLVAF) traverse the membrane as a helical segment. The Extracellular segment spans residues 704-729 (PPEVVTDWHMLPTEALVHCRTRSWVS). The chain crosses the membrane as a helical span at residues 730 to 750 (FGLAHATNATLAFLCFLGTFL). At 751-762 (VRSQPGCYNRAR) the chain is on the cytoplasmic side. The chain crosses the membrane as a helical span at residues 763–783 (GLTFAMLAYFITWVSFVPLLA). The Extracellular portion of the chain corresponds to 784–789 (NVQVVL). The chain crosses the membrane as a helical span at residues 790–810 (RPAVQMGALLLCVLGILAAFH). At 811–852 (LPRCYLLMRQPGLNTPEFFLGGGPGDAQGQNDGNTGNQGKHE) the chain is on the cytoplasmic side.

It belongs to the G-protein coupled receptor 3 family. TAS1R subfamily. Forms homodimers or heterodimers with TAS1R1 and TAS1R2.

The protein localises to the cell membrane. Functionally, putative taste receptor. TAS1R1/TAS1R3 responds to the umami taste stimulus (the taste of monosodium glutamate). TAS1R2/TAS1R3 recognizes diverse natural and synthetic sweeteners. TAS1R3 is essential for the recognition and response to the disaccharide trehalose. Sequence differences within and between species can significantly influence the selectivity and specificity of taste responses. The polypeptide is Taste receptor type 1 member 3 (TAS1R3) (Homo sapiens (Human)).